The following is a 147-amino-acid chain: Leghemoglobin 8 (147 aa).

Residues 2-147 (GFTEKQESLV…LAASIKKSMS (146 aa)) enclose the Globin domain. Nitrated tyrosine occurs at positions 25 and 30. Ser45 serves as a coordination point for heme b. The residue at position 45 (Ser45) is a Phosphoserine. Residue His62 coordinates O2. Residues Lys65, His94, and Lys97 each coordinate heme b. Tyr135 bears the Nitrated tyrosine mark.

This sequence belongs to the plant globin family. As to quaternary structure, monomer. Interacts with CAS31 in the cytoplasm; this interaction leads to its protection from denaturation under thermal and drought stresses. In terms of processing, nitrated in effective nodules and particularly in hypoxic conditions; this mechanism may play a protective role in the symbiosis by buffering toxic peroxynitrite NO(2)(-). Nitration level decrease during nodule senescence. Post-translationally, phosphorylation at Ser-45 disrupts the molecular environment of its porphyrin ring oxygen binding pocket, thus leading to a reduced oxygen consumption and to the delivery of oxygen O(2) to symbiosomes. As to expression, root nodules.

It localises to the cytoplasm. Its subcellular location is the nucleus. In terms of biological role, leghemoglobin that reversibly binds oxygen O(2) through a pentacoordinated heme iron. In root nodules, facilitates the diffusion of oxygen to the bacteroids while preventing the bacterial nitrogenase from being inactivated by buffering dioxygen, nitric oxide and carbon monoxide, and promoting the formation of reactive oxygen species (ROS, e.g. H(2)O(2)). This role is essential for symbiotic nitrogen fixation (SNF). This Medicago truncatula (Barrel medic) protein is Leghemoglobin 8.